We begin with the raw amino-acid sequence, 357 residues long: Histidine biosynthesis bifunctional protein HisB (357 aa).

Positions 1–168 (MSEKVLFIDR…IVFKLTKKHD (168 aa)) are histidinol-phosphatase. The Nucleophile role is filled by aspartate 9. Residues aspartate 9 and aspartate 11 each contribute to the Mg(2+) site. Aspartate 11 acts as the Proton donor in catalysis. 4 residues coordinate Zn(2+): cysteine 93, histidine 95, cysteine 101, and cysteine 103. Mg(2+) is bound at residue aspartate 130. The interval 169-357 (RHAKVVRNTK…KNLPSSKGLL (189 aa)) is imidazoleglycerol-phosphate dehydratase.

This sequence in the N-terminal section; belongs to the histidinol-phosphatase family. In the C-terminal section; belongs to the imidazoleglycerol-phosphate dehydratase family. It depends on Mg(2+) as a cofactor. The cofactor is Zn(2+).

It is found in the cytoplasm. The enzyme catalyses D-erythro-1-(imidazol-4-yl)glycerol 3-phosphate = 3-(imidazol-4-yl)-2-oxopropyl phosphate + H2O. It catalyses the reaction L-histidinol phosphate + H2O = L-histidinol + phosphate. Its pathway is amino-acid biosynthesis; L-histidine biosynthesis; L-histidine from 5-phospho-alpha-D-ribose 1-diphosphate: step 6/9. The protein operates within amino-acid biosynthesis; L-histidine biosynthesis; L-histidine from 5-phospho-alpha-D-ribose 1-diphosphate: step 8/9. This Buchnera aphidicola subsp. Baizongia pistaciae (strain Bp) protein is Histidine biosynthesis bifunctional protein HisB.